The following is a 469-amino-acid chain: MNPNQKLFASSGIAIALGIINLLIGISNMSLNISLYSKGENHKSDNLTCTNINQNNTTMVNTYINNTTIIDKNTKMENPGYLLLNKSLCNVEGWVVIAKDNAIRFGESEQIIVTREPYVSCDPLSCKMYALHQGTTIRNKHSNGTTHDRTAFRGLISTPLGNPPTVSNSEFICVGWSSTSCHDGVSRMTICVQGNNENATATVYYNKRLTTTIKTWAKNILRTQESECVCHNSTCVVVMTDGPANNQAFTKVIYFHKGTIIKEEPLKGSAKHIEECSCYGHNQRVTCVCRDNWQGANRPVIEIDMNNLEHTSRYICTGVLTDTSRPKDKAIGECFNPITGSPGAPGIKGFGFLNENNTWLGRTISPKLRSGFEMLKIPNAGTDPDSKIKERQEIVGNDNWSGYSGSFIDYWNDNSECYNPCFYVELIRGRPEEAKYVEWTSNSLIALCGSPIPVGSGSFPDGAQIKYFS.

Residues Met-1–Lys-6 are Intravirion-facing. Residues Leu-7–Ser-27 form a helical membrane-spanning segment. Residues Ser-11–Ile-33 form an involved in apical transport and lipid raft association region. Asn-28, Asn-32, Asn-46, Asn-55, Asn-56, Asn-65, Asn-66, and Asn-85 each carry an N-linked (GlcNAc...) asparagine; by host glycan. Residues Asn-28–Ser-469 lie on the Virion surface side of the membrane. Residues Tyr-36 to Asn-85 form a hypervariable stalk region region. The segment at Leu-88–Ser-469 is head of neuraminidase. Cystine bridges form between Cys-89–Cys-417, Cys-121–Cys-126, Cys-181–Cys-228, Cys-230–Cys-235, Cys-276–Cys-289, Cys-278–Cys-287, Cys-316–Cys-334, and Cys-421–Cys-448. Arg-115 contributes to the substrate binding site. Asn-143 is a glycosylation site (N-linked (GlcNAc...) asparagine; by host). The active-site Proton donor/acceptor is the Asp-148. Substrate is bound at residue Arg-149. 2 N-linked (GlcNAc...) asparagine; by host glycosylation sites follow: Asn-198 and Asn-232. Position 274–275 (Glu-274–Glu-275) interacts with substrate. Arg-290 is a binding site for substrate. Residues Asp-291, Gly-295, and Asp-322 each contribute to the Ca(2+) site. A glycan (N-linked (GlcNAc...) asparagine; by host) is linked at Asn-356. Residue Arg-369 coordinates substrate. A glycan (N-linked (GlcNAc...) asparagine; by host) is linked at Asn-399. Tyr-403 acts as the Nucleophile in catalysis.

It belongs to the glycosyl hydrolase 34 family. Homotetramer. Ca(2+) is required as a cofactor. In terms of processing, N-glycosylated.

Its subcellular location is the virion membrane. It localises to the host apical cell membrane. The enzyme catalyses Hydrolysis of alpha-(2-&gt;3)-, alpha-(2-&gt;6)-, alpha-(2-&gt;8)- glycosidic linkages of terminal sialic acid residues in oligosaccharides, glycoproteins, glycolipids, colominic acid and synthetic substrates.. With respect to regulation, inhibited by the neuraminidase inhibitors zanamivir (Relenza) and oseltamivir (Tamiflu). These drugs interfere with the release of progeny virus from infected cells and are effective against all influenza strains. Resistance to neuraminidase inhibitors is quite rare. Catalyzes the removal of terminal sialic acid residues from viral and cellular glycoconjugates. Cleaves off the terminal sialic acids on the glycosylated HA during virus budding to facilitate virus release. Additionally helps virus spread through the circulation by further removing sialic acids from the cell surface. These cleavages prevent self-aggregation and ensure the efficient spread of the progeny virus from cell to cell. Otherwise, infection would be limited to one round of replication. Described as a receptor-destroying enzyme because it cleaves a terminal sialic acid from the cellular receptors. May facilitate viral invasion of the upper airways by cleaving the sialic acid moieties on the mucin of the airway epithelial cells. Likely to plays a role in the budding process through its association with lipid rafts during intracellular transport. May additionally display a raft-association independent effect on budding. Plays a role in the determination of host range restriction on replication and virulence. Sialidase activity in late endosome/lysosome traffic seems to enhance virus replication. The polypeptide is Neuraminidase (Influenza A virus (strain A/Equine/Prague/1/1956 H7N7)).